We begin with the raw amino-acid sequence, 86 residues long: Polcalcin Nic t 2 (86 aa).

EF-hand domains are found at residues 8–42 and 43–78; these read QDIADRERIFKRFDANGDGQISATELGETLQTLGS and VTPEEVKYMMDEIDTNKDGFISFQEFIEFARANRGL. The Ca(2+) site is built by Asp21, Asn23, Asp25, Gln27, Glu32, Asp56, Asn58, Asp60, and Glu67.

This chain is Polcalcin Nic t 2 (Nict2), found in Nicotiana tabacum (Common tobacco).